A 545-amino-acid polypeptide reads, in one-letter code: MAAKEVKFGDSARQRMLAGVNILADAVKATLGPKGRNVVLEKSFGAPTITKDGVSVAKEISLKDKFENMGAQMVKEVASKASDDAGDGTTTATVLAQAIVNEGLKSVAAGMNPMDLKRGIDKAIAEAVKHVQSIAVPCADSKSISQVGTISANSDSSIGNLIAEAMEKVGKEGVITVEEGTSLDNELDVVEGMQFDRGYLSPYFINNQDNMSVEHDNPFILLVDKKISNIRELLPVLEGVAKSGKPLVIVAEDVEGEALATLVVNNIRGIVKVAAVKAPGFGDRRKAMLQDIAVLTGGTVISEEVGLDLESATLEHLGTAKRVTMNKDNTTIVDGAGKAEEIKTRVQQIRVQIEETSSDYDREKLQERVAKLAGGVAVIKVGAATEVEMKEKKARVEDALHATRAAVEEGVVPGGGTALIRAVAAIADLKGDNEDQNAGIGIARRAMESPLRQIVANAGEEPSVVADSVKKGSGNFGYNAATGVYGDMIEMGILDPAKVTRTALQAAGSIAGLMITTEAMVADLPEDKPAAAPDMGGMGGMGGMM.

ATP-binding positions include 30–33, Lys-51, 87–91, Gly-415, 479–481, and Asp-495; these read TLGP, DGTTT, and NAA.

This sequence belongs to the chaperonin (HSP60) family. As to quaternary structure, forms a cylinder of 14 subunits composed of two heptameric rings stacked back-to-back. Interacts with the co-chaperonin GroES.

The protein localises to the cytoplasm. It carries out the reaction ATP + H2O + a folded polypeptide = ADP + phosphate + an unfolded polypeptide.. In terms of biological role, together with its co-chaperonin GroES, plays an essential role in assisting protein folding. The GroEL-GroES system forms a nano-cage that allows encapsulation of the non-native substrate proteins and provides a physical environment optimized to promote and accelerate protein folding. The protein is Chaperonin GroEL of Cellvibrio japonicus (strain Ueda107) (Pseudomonas fluorescens subsp. cellulosa).